A 940-amino-acid chain; its full sequence is MDDYKDTLNLPKTLFSMRGNLSKKEPNILKSWNENNLYKLIRKKNQEKKIFFLHDGPPYANGNIHIGHAVNKILKDIIIKSKNMSGFDAPYIPSWDCHGLPIEQKVEEKIKSNQGEISTTEFQEKCRKYAQDQVEKQKKDFIRLGVIGDWDNPHLTMNFKNEANIIKTLSKIVQKKHLYQDFKPIHWCLKCASSLSEAEIEYSKKKSDSIIVGFKFKYKSIIEKLFDFQISNKKEIHLLIWTTTPWTLPSSKAISIHPDFQYQLIETERCYLIIAKELVEKTLNTLKIKKSIIRNYVKGRFLEKMICLHPFLKNIDLPVILGKHVTLESGTGAVHTAPDHGLEDYIISQKYNIKTSNIVNFKGEYISNTHDKLDGVNVLEANSIIIELLIKNNTFFHHESLIHSYPHCWRHKSPVIYRATPQWFIDIDQKQLRIKLLQEIKKVRWIPEWGESRIGEMIKKRPDWCISRQRKWGVPMSIFIHKNTRKIHPNTFVFMKKIAKKVELEGLQVWWNIDSKEILGEEYQSYEKILDILDVWFESGNTHTTINYKNKNYTKKNADMFLEGSDQHRGWFMSSLIISTLISEKKPYSEVLTHGFVVDGKGQKMSKSIGNTISPNEIVDTLGADILRLWVASSNYSNDISISNEILKSSSDIYRRIRNTARFMLANISDFDPKKNIISKENMVLLDKWAIGQTKIVQEEIIQHYNNYNFHAVIQRLMYFCSIEMGSFYLDIIKDRQYTLKKHSQERRSSQTAIYYIINSLVRWIAPILSFTADEIWSYLPENNSQYVFMEEWFDKLFYLDQDDLFNYQFWNEIITIKHEINKFLEEAIQNKTINNSLETSIILYVSHELSNKLKILEQETKFIFLTSDIQIKLYDTAPKNAKKSKIVPYLKVSLEKIKGKKCPRCWHYFNFTKKNIKNSDICNRCILNTIGNGEKRIFI.

Positions 58 to 68 (PYANGNIHIGH) match the 'HIGH' region motif. L-isoleucyl-5'-AMP is bound at residue Glu-563. The short motif at 604-608 (KMSKS) is the 'KMSKS' region element. Lys-607 contributes to the ATP binding site. 4 residues coordinate Zn(2+): Cys-903, Cys-906, Cys-923, and Cys-926.

Belongs to the class-I aminoacyl-tRNA synthetase family. IleS type 1 subfamily. Monomer. Requires Zn(2+) as cofactor.

It is found in the cytoplasm. It catalyses the reaction tRNA(Ile) + L-isoleucine + ATP = L-isoleucyl-tRNA(Ile) + AMP + diphosphate. Its function is as follows. Catalyzes the attachment of isoleucine to tRNA(Ile). As IleRS can inadvertently accommodate and process structurally similar amino acids such as valine, to avoid such errors it has two additional distinct tRNA(Ile)-dependent editing activities. One activity is designated as 'pretransfer' editing and involves the hydrolysis of activated Val-AMP. The other activity is designated 'posttransfer' editing and involves deacylation of mischarged Val-tRNA(Ile). The polypeptide is Isoleucine--tRNA ligase (Buchnera aphidicola subsp. Acyrthosiphon pisum (strain APS) (Acyrthosiphon pisum symbiotic bacterium)).